The sequence spans 559 residues: MGGNKQRWFSFHQRSSSATTTTLPQHKHDETPPEFLCPITGFLMSDPVVVSSGQTFERLSVQVCRNLGYIPDLLDGTRPDLSTVIPNLAMKSTIFSWCDRQKVDHPRPPDAAYVEGVVRARMDKDPNPSPGQSPGPGDKDPEPEILPPVEENSPSDYDAVMEAIRARSKNSMSPTTSLESVTIGQSSYHPVRAVSMFSSSTTSSSSGVFAGADSPFRNAMSFSSTDHSSSPMSPEEEEIFNKLRGTDIFDHEQGLILLRKMTRSSEDLRVSLCTDRILSFLRSLLVSRYNLVQTNAAASVVNLSLEKQNKVKIVRSGFVPLLIDVLKSGTTEAQEHVAGALFSLALEDENKMVIGVLGAVEPLLHALRSSESERARQDAALALYHLSLIPSNRTRLVRAGAVPTLLSMVRSGDSTSRILLVLCNLAACPDGKGAMLDGNAVAILVGKLREVGGGDSEAARENCVAVLLTLCQGNLRFRGLASEAGAEEVLMEVEENGNERVKEKASKILLAMRGGGGGESEFGENAEAREWNRMLEATGLSRTQFQGGQNGGFAYSSQF.

2 disordered regions span residues 1–30 and 121–156; these read MGGNKQRWFSFHQRSSSATTTTLPQHKHDE and RMDKDPNPSPGQSPGPGDKDPEPEILPPVEENSPSD. A compositionally biased stretch (polar residues) spans 12-24; the sequence is HQRSSSATTTTLP. In terms of domain architecture, U-box spans 30–104; the sequence is ETPPEFLCPI…FSWCDRQKVD (75 aa). ARM repeat units follow at residues 266 to 305, 307 to 346, 348 to 388, 390 to 427, and 428 to 472; these read EDLRVSLCTDRILSFLRSLLVSRYNLVQTNAAASVVNLSL, KQNKVKIVRSGFVPLLIDVLKSGTTEAQEHVAGALFSLAL, DENK…HLSL, PSNRTRLVRAGAVPTLLSMVRSGDSTSRILLVLCNLAA, and CPDG…TLCQ.

The catalysed reaction is S-ubiquitinyl-[E2 ubiquitin-conjugating enzyme]-L-cysteine + [acceptor protein]-L-lysine = [E2 ubiquitin-conjugating enzyme]-L-cysteine + N(6)-ubiquitinyl-[acceptor protein]-L-lysine.. It functions in the pathway protein modification; protein ubiquitination. Its function is as follows. Functions as an E3 ubiquitin ligase. The sequence is that of U-box domain-containing protein 41 (PUB41) from Arabidopsis thaliana (Mouse-ear cress).